The following is a 514-amino-acid chain: Maltose/maltodextrin transport system permease protein MalF (514 aa).

The Cytoplasmic segment spans residues 1–16; the sequence is MDVIKKKHWWQSDQLK. A helical membrane pass occupies residues 17–36; sequence WSVIGLLGLLVGYLVVLMYV. Residues 37-39 lie on the Periplasmic side of the membrane; the sequence is QGE. A helical transmembrane segment spans residues 40-57; sequence YLFAIMTLILSSAGLYIF. The Cytoplasmic portion of the chain corresponds to 58 to 69; it reads ANRKTYAWRYVY. A helical membrane pass occupies residues 70-92; the sequence is PGLAGMGLFVLFPLVCTIAIAFT. Over 93–283 the chain is Periplasmic; that stretch reads NYSSTNQLTF…QKPFFAIFVW (191 aa). One can recognise an ABC transmembrane type-1 domain in the interval 281–505; that stretch reads FVWTVVFSVL…LLVGALAIVN (225 aa). Residues 284 to 306 traverse the membrane as a helical segment; the sequence is TVVFSVLTVVLTVAVGMVLACLV. Residues 307–318 are Cytoplasmic-facing; the sequence is QWEALKGKAIYR. The chain crosses the membrane as a helical span at residues 319–341; that stretch reads VLLILPYAVPSFISILIFKGLFN. Residues 342 to 369 are Periplasmic-facing; sequence QSFGEINMMLSALFGIKPAWFSDPNTAR. A helical membrane pass occupies residues 370 to 392; the sequence is AMVIIVNTWLGYPYMMILCMGLL. At 393–412 the chain is on the cytoplasmic side; it reads KAIPDDLYEASAMDGAGPFQ. Residues 413–435 traverse the membrane as a helical segment; that stretch reads NFFKITLPLLIKPLTPLMIASFA. Over 436–483 the chain is Periplasmic; it reads FNFNNFVLIQLLTNGGPDRLGTTTPAGYTDLLVSYTYRIAFEGGGGQD. A helical transmembrane segment spans residues 484–506; that stretch reads FGLAAAIATLIFLLVGALAIVNL. At 507–514 the chain is on the cytoplasmic side; the sequence is KATRMKFD.

It belongs to the binding-protein-dependent transport system permease family. MalFG subfamily. The complex is composed of two ATP-binding proteins (MalK), two transmembrane proteins (MalG and MalF) and a solute-binding protein (MalE).

It localises to the cell inner membrane. Its function is as follows. Part of the ABC transporter complex MalEFGK involved in maltose/maltodextrin import. Probably responsible for the translocation of the substrate across the membrane. The chain is Maltose/maltodextrin transport system permease protein MalF (malF) from Salmonella typhi.